The chain runs to 1466 residues: DNA-directed RNA polymerase subunit beta'' (1466 aa).

Residues C220, C296, C303, and C306 each coordinate Zn(2+). The tract at residues 618 to 725 is disordered; that stretch reads TREEDLEDEY…EDEYDSSEED (108 aa). Acidic residues-rich tracts occupy residues 621-631, 639-651, and 707-725; these read EDLEDEYETLE, DEYE…DEYG, and LEED…SEED.

This sequence belongs to the RNA polymerase beta' chain family. RpoC2 subfamily. As to quaternary structure, in plastids the minimal PEP RNA polymerase catalytic core is composed of four subunits: alpha, beta, beta', and beta''. When a (nuclear-encoded) sigma factor is associated with the core the holoenzyme is formed, which can initiate transcription. Zn(2+) serves as cofactor.

It is found in the plastid. The protein resides in the chloroplast. It catalyses the reaction RNA(n) + a ribonucleoside 5'-triphosphate = RNA(n+1) + diphosphate. Its function is as follows. DNA-dependent RNA polymerase catalyzes the transcription of DNA into RNA using the four ribonucleoside triphosphates as substrates. This chain is DNA-directed RNA polymerase subunit beta'', found in Agrostis stolonifera (Creeping bentgrass).